We begin with the raw amino-acid sequence, 134 residues long: Profilin-3 (134 aa).

The cysteines at positions 13 and 118 are disulfide-linked. Positions 84–100 (AVIRGKKGSGGITIKKT) match the Involved in PIP2 interaction motif. Threonine 114 is subject to Phosphothreonine.

The protein belongs to the profilin family. Occurs in many kinds of cells as a complex with monomeric actin in a 1:1 ratio. Phosphorylated by MAP kinases.

Its subcellular location is the cytoplasm. It is found in the cytoskeleton. In terms of biological role, binds to actin and affects the structure of the cytoskeleton. At high concentrations, profilin prevents the polymerization of actin, whereas it enhances it at low concentrations. In Olea europaea (Common olive), this protein is Profilin-3.